A 123-amino-acid chain; its full sequence is Small ribosomal subunit protein uS12 (123 aa).

Residues 9–32 (ANPREVQKSRKKVPALQQSPQKRG) are disordered. Position 89 is a 3-methylthioaspartic acid (aspartate 89).

It belongs to the universal ribosomal protein uS12 family. Part of the 30S ribosomal subunit. Contacts proteins S8 and S17. May interact with IF1 in the 30S initiation complex.

With S4 and S5 plays an important role in translational accuracy. Functionally, interacts with and stabilizes bases of the 16S rRNA that are involved in tRNA selection in the A site and with the mRNA backbone. Located at the interface of the 30S and 50S subunits, it traverses the body of the 30S subunit contacting proteins on the other side and probably holding the rRNA structure together. The combined cluster of proteins S8, S12 and S17 appears to hold together the shoulder and platform of the 30S subunit. In Bradyrhizobium sp. (strain BTAi1 / ATCC BAA-1182), this protein is Small ribosomal subunit protein uS12.